We begin with the raw amino-acid sequence, 681 residues long: Potassium-transporting ATPase ATP-binding subunit (681 aa).

The next 4 membrane-spanning stretches (helical) occupy residues 30–50, 59–79, 216–236, and 255–275; these read LLVYVGAILATSLYFLGFFGI, LAIALILWFTVLFANFAEAIA, ILLVTLSIIFLAVSATLLPFT, and IALLVCLAPTTIGALLSSIGI. The active-site 4-aspartylphosphate intermediate is aspartate 306. Residues aspartate 343, glutamate 347, 376–383, and lysine 394 each bind ATP; that span reads FTATTRMS. 2 residues coordinate Mg(2+): aspartate 517 and aspartate 521. Transmembrane regions (helical) follow at residues 587 to 607, 615 to 635, and 661 to 681; these read FAIIPVLFYGIFPQLEALNLM, AILSAIIYNAVIIIILIPLSL, and LIAPFIAIKLIDMLLTVLGIV.

This sequence belongs to the cation transport ATPase (P-type) (TC 3.A.3) family. Type IA subfamily. The system is composed of three essential subunits: KdpA, KdpB and KdpC.

The protein resides in the cell membrane. It catalyses the reaction K(+)(out) + ATP + H2O = K(+)(in) + ADP + phosphate + H(+). Part of the high-affinity ATP-driven potassium transport (or Kdp) system, which catalyzes the hydrolysis of ATP coupled with the electrogenic transport of potassium into the cytoplasm. This subunit is responsible for energy coupling to the transport system and for the release of the potassium ions to the cytoplasm. The protein is Potassium-transporting ATPase ATP-binding subunit of Listeria monocytogenes serotype 4b (strain CLIP80459).